A 235-amino-acid chain; its full sequence is Ribonuclease PH (235 aa).

Residues Arg86 and 124-126 (GTR) each bind phosphate.

The protein belongs to the RNase PH family. Homohexameric ring arranged as a trimer of dimers.

The catalysed reaction is tRNA(n+1) + phosphate = tRNA(n) + a ribonucleoside 5'-diphosphate. Its function is as follows. Phosphorolytic 3'-5' exoribonuclease that plays an important role in tRNA 3'-end maturation. Removes nucleotide residues following the 3'-CCA terminus of tRNAs; can also add nucleotides to the ends of RNA molecules by using nucleoside diphosphates as substrates, but this may not be physiologically important. Probably plays a role in initiation of 16S rRNA degradation (leading to ribosome degradation) during starvation. The polypeptide is Ribonuclease PH (Francisella tularensis subsp. novicida (strain U112)).